A 164-amino-acid polypeptide reads, in one-letter code: Replication restart protein DnaT (164 aa).

It belongs to the DnaT family. As to quaternary structure, homooligomerizes. Interacts with PriB. Component of the replication restart primosome. Primosome assembly occurs via a 'hand-off' mechanism. PriA binds to replication forks, subsequently PriB then DnaT bind; DnaT then displaces ssDNA to generate the helicase loading substrate.

Functionally, involved in the restart of stalled replication forks, which reloads the replicative helicase on sites other than the origin of replication. Can function in multiple replication restart pathways. Displaces ssDNA from a PriB-ssDNA complex. Probably forms a spiral filament on ssDNA. The protein is Replication restart protein DnaT of Buchnera aphidicola subsp. Acyrthosiphon pisum (strain 5A).